The sequence spans 233 residues: Coproporphyrinogen-III oxidase 2, chloroplastic (233 aa).

Residues 1-48 constitute a chloroplast transit peptide; it reads MASHSSTLFTSPSSFILFSSHRLKSSPNYFTYHFPRSVKRPHFDLRCS. S174 contributes to the substrate binding site. H188 serves as the catalytic Proton donor.

Belongs to the aerobic coproporphyrinogen-III oxidase family. Homodimer.

It localises to the plastid. The protein resides in the chloroplast. It catalyses the reaction coproporphyrinogen III + O2 + 2 H(+) = protoporphyrinogen IX + 2 CO2 + 2 H2O. Its pathway is porphyrin-containing compound metabolism; protoporphyrin-IX biosynthesis; protoporphyrinogen-IX from coproporphyrinogen-III (O2 route): step 1/1. It participates in porphyrin-containing compound metabolism; chlorophyll biosynthesis. Key enzyme in heme biosynthesis. Catalyzes the oxidative decarboxylation of propionic acid side chains of rings A and B of coproporphyrinogen III. The protein is Coproporphyrinogen-III oxidase 2, chloroplastic (CPX2) of Arabidopsis thaliana (Mouse-ear cress).